Reading from the N-terminus, the 361-residue chain is MNDDSNGRRRRPAAFPVGTEDATSRELEQTPRRAPGSFSDKIVMTPDADDPFIETTAAIEALNPPEARPPRRRLSFGKIAAGAFGILISLAVGLWVDRLVRDLFSRADWLGYGAVAVVAIGAAAFLIVVAREIFGMMQLTAVQALKADLAAAAVAGKAQAARAATARLVHLLAGNPRTAKGRARLADTEGEIIDAPHLVDLTERELLAPLDREARRIILGAAKRVSIVTAVSPRALVDLGYVLYESARMIRAMAELYGGRPGTLGLLRLMRDVVAHLAVTGSIAVGDSLVQQILGHGLASKLSARLGEGVINGLMTARIGIAAMDLCRPMPFRALKRPSIGDFLADLAPGAGRTESATGKA.

Residues Met1–Asp40 are disordered. Positions Ala22–Pro31 are enriched in basic and acidic residues. 2 helical membrane-spanning segments follow: residues Phe76–Val96 and Trp109–Val129.

Belongs to the UPF0283 family.

It localises to the cell inner membrane. In Sinorhizobium medicae (strain WSM419) (Ensifer medicae), this protein is UPF0283 membrane protein Smed_1530.